The chain runs to 349 residues: Ribosomal RNA large subunit methyltransferase M (349 aa).

S-adenosyl-L-methionine-binding positions include Ser183, 216–219, Asp235, Asp255, and Asp271; that span reads APGG. Lys300 serves as the catalytic Proton acceptor.

The protein belongs to the class I-like SAM-binding methyltransferase superfamily. RNA methyltransferase RlmE family. RlmM subfamily. In terms of assembly, monomer.

The protein localises to the cytoplasm. It carries out the reaction cytidine(2498) in 23S rRNA + S-adenosyl-L-methionine = 2'-O-methylcytidine(2498) in 23S rRNA + S-adenosyl-L-homocysteine + H(+). Its function is as follows. Catalyzes the 2'-O-methylation at nucleotide C2498 in 23S rRNA. The polypeptide is Ribosomal RNA large subunit methyltransferase M (Stutzerimonas stutzeri (strain A1501) (Pseudomonas stutzeri)).